The chain runs to 257 residues: MKRILLTNDDGYESKGLIKLAKMLKKHFKAEITIVAPANEKSACSHSITLTKPLRFQKVKKRFYKLEDGTPADCVYLALHALYKNHLPDLIISGINKGANVGEDITYSGTCAGAMEAVLHGIPAIALSQFYQDDQKELNFKLALNITKKIVKKVFKKGFPLDKKEFLNINFPSSKTNFKGIKICKAGKRIYSYEAHSNINPRGIEYYWLAAANLDHEDEKKSDITLLKQGYATITPIMLNLTAYKQMKNLKKWMKNG.

Asp-9, Asp-10, Ser-42, and Asn-96 together coordinate a divalent metal cation.

Belongs to the SurE nucleotidase family. A divalent metal cation is required as a cofactor.

The protein resides in the cytoplasm. The enzyme catalyses a ribonucleoside 5'-phosphate + H2O = a ribonucleoside + phosphate. Its function is as follows. Nucleotidase that shows phosphatase activity on nucleoside 5'-monophosphates. The polypeptide is 5'-nucleotidase SurE (Campylobacter lari (strain RM2100 / D67 / ATCC BAA-1060)).